Here is a 769-residue protein sequence, read N- to C-terminus: Sensor protein DivL (769 aa).

Residues 6–26 traverse the membrane as a helical segment; it reads LILAAAAGAVCLAISVALWSH. Positions 547 to 758 constitute a Histidine kinase domain; sequence NVSYELRTPL…TFTCHLPETQ (212 aa). Position 550 is a phosphotyrosine; by autocatalysis (Tyr-550).

In terms of processing, autophosphorylated.

It is found in the cell membrane. The catalysed reaction is ATP + protein L-histidine = ADP + protein N-phospho-L-histidine.. In terms of biological role, required for cell division and growth. It catalyzes the phosphorylation of CtrA and activates transcription in vitro of the cell cycle-regulated fliF promoter. The chain is Sensor protein DivL (divL) from Caulobacter vibrioides (strain ATCC 19089 / CIP 103742 / CB 15) (Caulobacter crescentus).